The following is a 136-amino-acid chain: NADPH-dependent 7-cyano-7-deazaguanine reductase (136 aa).

The active-site Thioimide intermediate is the C50. D57 (proton donor) is an active-site residue. Substrate-binding positions include 72–74 (YEL) and 91–92 (HE).

The protein belongs to the GTP cyclohydrolase I family. QueF type 1 subfamily.

It is found in the cytoplasm. It catalyses the reaction 7-aminomethyl-7-carbaguanine + 2 NADP(+) = 7-cyano-7-deazaguanine + 2 NADPH + 3 H(+). It participates in tRNA modification; tRNA-queuosine biosynthesis. Catalyzes the NADPH-dependent reduction of 7-cyano-7-deazaguanine (preQ0) to 7-aminomethyl-7-deazaguanine (preQ1). In Prochlorococcus marinus (strain MIT 9301), this protein is NADPH-dependent 7-cyano-7-deazaguanine reductase.